A 679-amino-acid chain; its full sequence is DNA ligase (679 aa).

NAD(+) is bound by residues 86–90 and 129–130; these read DEAYD and ST. Lys167 functions as the N6-AMP-lysine intermediate in the catalytic mechanism. NAD(+) contacts are provided by Arg183, Glu214, and Lys326. Cys417, Cys420, Cys433, and Cys439 together coordinate Zn(2+). The BRCT domain occupies 599 to 679; sequence GEKSPISGKT…EAYRQLVSLD (81 aa).

It belongs to the NAD-dependent DNA ligase family. LigA subfamily. Requires Mg(2+) as cofactor. Mn(2+) serves as cofactor.

The catalysed reaction is NAD(+) + (deoxyribonucleotide)n-3'-hydroxyl + 5'-phospho-(deoxyribonucleotide)m = (deoxyribonucleotide)n+m + AMP + beta-nicotinamide D-nucleotide.. Functionally, DNA ligase that catalyzes the formation of phosphodiester linkages between 5'-phosphoryl and 3'-hydroxyl groups in double-stranded DNA using NAD as a coenzyme and as the energy source for the reaction. It is essential for DNA replication and repair of damaged DNA. In Desulfotalea psychrophila (strain LSv54 / DSM 12343), this protein is DNA ligase.